Here is a 428-residue protein sequence, read N- to C-terminus: Chaperone SurA (428 aa).

A signal peptide spans 1–20 (MKNWKTLLLGIAMIANTSFA). PpiC domains lie at 171-272 (STEL…KVND) and 282-382 (VTEV…ELLD).

It localises to the periplasm. It catalyses the reaction [protein]-peptidylproline (omega=180) = [protein]-peptidylproline (omega=0). In terms of biological role, chaperone involved in the correct folding and assembly of outer membrane proteins. Recognizes specific patterns of aromatic residues and the orientation of their side chains, which are found more frequently in integral outer membrane proteins. May act in both early periplasmic and late outer membrane-associated steps of protein maturation. The polypeptide is Chaperone SurA (Salmonella choleraesuis (strain SC-B67)).